A 998-amino-acid chain; its full sequence is Ephrin type-B receptor 3 (998 aa).

The first 33 residues, 1–33 (MARARPPPPPSPPPGLLPLLPPLLLLPLLLLPA), serve as a signal peptide directing secretion. Residues 34–559 (GCRALEETLM…AQQLQEQLPL (526 aa)) lie on the Extracellular side of the membrane. The Eph LBD domain occupies 39 to 217 (EETLMDTKWV…FYKKCASTTA (179 aa)). Cysteine 81 and cysteine 199 are disulfide-bonded. Fibronectin type-III domains lie at 339-451 (VPSP…TNQA) and 452-545 (APSE…TTSE). Residues asparagine 351 and asparagine 445 are each glycosylated (N-linked (GlcNAc...) asparagine). A helical membrane pass occupies residues 560-580 (IVGSATAGLVFVVAVVVIAIV). Residues 581–998 (CLRKQRHGSD…QMNQTLPVQV (418 aa)) are Cytoplasmic-facing. Residue tyrosine 614 is modified to Phosphotyrosine; by autocatalysis. The 264-residue stretch at 633-896 (VKIEEVIGAG…QIVNTLDKLI (264 aa)) folds into the Protein kinase domain. Residues 639–647 (IGAGEFGEV) and lysine 665 each bind ATP. Aspartate 758 acts as the Proton acceptor in catalysis. The 65-residue stretch at 925–989 (TTFTTVGDWL…LSSIQDMRLQ (65 aa)) folds into the SAM domain. A PDZ-binding motif is present at residues 996–998 (VQV).

Belongs to the protein kinase superfamily. Tyr protein kinase family. Ephrin receptor subfamily. In terms of assembly, heterotetramer upon binding of the ligand. The heterotetramer is composed of an ephrin dimer and a receptor dimer. Oligomerization is probably required to induce biological responses. In terms of processing, phosphorylated. Autophosphorylates upon ligand-binding. Autophosphorylation on Tyr-614 is required for interaction with SH2 domain-containing proteins. Ubiquitinated by RNF186, mainly through 'Lys-48' and 'Lys-63'-linked polyubiquitin chains. As to expression, ubiquitous.

It is found in the cell membrane. Its subcellular location is the cell projection. It localises to the dendrite. It carries out the reaction L-tyrosyl-[protein] + ATP = O-phospho-L-tyrosyl-[protein] + ADP + H(+). Receptor tyrosine kinase which binds promiscuously transmembrane ephrin-B family ligands residing on adjacent cells, leading to contact-dependent bidirectional signaling into neighboring cells. The signaling pathway downstream of the receptor is referred to as forward signaling while the signaling pathway downstream of the ephrin ligand is referred to as reverse signaling. Generally has an overlapping and redundant function with EPHB2. Like EPHB2, functions in axon guidance during development regulating for instance the neurons forming the corpus callosum and the anterior commissure, 2 major interhemispheric connections between the temporal lobes of the cerebral cortex. In addition to its role in axon guidance also plays an important redundant role with other ephrin-B receptors in development and maturation of dendritic spines and the formation of excitatory synapses. Controls other aspects of development through regulation of cell migration and positioning. This includes angiogenesis, palate development and thymic epithelium development for instance. Forward and reverse signaling through the EFNB2/EPHB3 complex also regulate migration and adhesion of cells that tubularize the urethra and septate the cloaca. Finally, plays an important role in intestinal epithelium differentiation segregating progenitor from differentiated cells in the crypt. The polypeptide is Ephrin type-B receptor 3 (EPHB3) (Homo sapiens (Human)).